Consider the following 221-residue polypeptide: GTP-binding nuclear protein Ran-1 (221 aa).

The 165-residue stretch at 10–174 (DYPSFKLVIV…LYLARKLAGD (165 aa)) folds into the Small GTPase Ran-type domain. 21-28 (DGGTGKTT) provides a ligand contact to GTP. The tract at residues 40-48 (KKYEPTIGV) is switch-I. GTP contacts are provided by residues Gly71, 125–128 (NKVD), and 153–155 (SAK). The segment at 71-87 (GQEKFGGLRDGYYIHGQ) is switch-II.

The protein belongs to the small GTPase superfamily. Ran family. In terms of assembly, found in a nuclear export complex with RanGTP, exportin and pre-miRNA.

It localises to the nucleus. Functionally, GTP-binding protein involved in nucleocytoplasmic transport. Required for the import of protein into the nucleus and also for RNA export. Involved in chromatin condensation and control of cell cycle. The sequence is that of GTP-binding nuclear protein Ran-1 (RAN1) from Oryza sativa subsp. indica (Rice).